A 262-amino-acid chain; its full sequence is Putative hydroxypyruvate isomerase (262 aa).

Active-site proton donor/acceptor residues include glutamate 146 and glutamate 244.

It belongs to the hyi family.

It carries out the reaction 3-hydroxypyruvate = 2-hydroxy-3-oxopropanoate. Functionally, catalyzes the reversible isomerization between hydroxypyruvate and 2-hydroxy-3-oxopropanoate (also termed tartronate semialdehyde). The protein is Putative hydroxypyruvate isomerase of Caenorhabditis elegans.